A 661-amino-acid chain; its full sequence is UvrABC system protein B (661 aa).

In terms of domain architecture, Helicase ATP-binding spans 31–186; sequence DNIEGGEKAQ…LLNALVDIQF (156 aa). 44 to 51 contributes to the ATP binding site; that stretch reads GATGTGKT. Residues 97–120 carry the Beta-hairpin motif; sequence YYDYYQPEAYVPSSDTYIEKDSSV. The 167-residue stretch at 435–601 folds into the Helicase C-terminal domain; sequence QMDDLLGEIN…TIKKEIRDLI (167 aa). The UVR domain maps to 626 to 661; it reads KAMIKKLEGQMQEAAEVLDFELAAQIRDMVIELKNM.

The protein belongs to the UvrB family. As to quaternary structure, forms a heterotetramer with UvrA during the search for lesions. Interacts with UvrC in an incision complex.

It localises to the cytoplasm. The UvrABC repair system catalyzes the recognition and processing of DNA lesions. A damage recognition complex composed of 2 UvrA and 2 UvrB subunits scans DNA for abnormalities. Upon binding of the UvrA(2)B(2) complex to a putative damaged site, the DNA wraps around one UvrB monomer. DNA wrap is dependent on ATP binding by UvrB and probably causes local melting of the DNA helix, facilitating insertion of UvrB beta-hairpin between the DNA strands. Then UvrB probes one DNA strand for the presence of a lesion. If a lesion is found the UvrA subunits dissociate and the UvrB-DNA preincision complex is formed. This complex is subsequently bound by UvrC and the second UvrB is released. If no lesion is found, the DNA wraps around the other UvrB subunit that will check the other stand for damage. The chain is UvrABC system protein B from Streptococcus suis (strain 98HAH33).